The chain runs to 304 residues: Chromo domain-containing protein cec-1 (304 aa).

Residues 8-66 (YTVESILEHRKKKGKSEFYIKWLGYDHTHNSWEPKENIVDPTLIEAFFTREAARKAEIK) form the Chromo domain. Residues 63–73 (AEIKAKKDKMA) are compositionally biased toward basic and acidic residues. Disordered stretches follow at residues 63 to 235 (AEIK…EIQL) and 248 to 304 (VEPA…AIIE). Residues 75-102 (GKKGASSKASASVSKASASTPARGAKAA) are compositionally biased toward low complexity. Residues 106 to 116 (PPKKSPPKRQR) show a composition bias toward basic residues. The segment covering 122–141 (IRPDSDTDEEHSSADKKSKA) has biased composition (basic and acidic residues). Acidic residues-rich tracts occupy residues 142-152 (EDEEEVEDDEE), 163-204 (EEPE…DVQL), and 212-233 (EEEE…EEEI). Over residues 248 to 292 (VEPAVATPEPSEPSSSEKAVVENGSSSAAAGNSASKPEVSAVEVV) the composition is skewed to low complexity. Acidic residues predominate over residues 293–304 (TVEDDDDIAIIE).

It is found in the nucleus. The protein resides in the chromosome. The polypeptide is Chromo domain-containing protein cec-1 (cec-1) (Caenorhabditis elegans).